A 161-amino-acid polypeptide reads, in one-letter code: MAKKNKKISLNTIAFNKKARHVYFIEQTLEAGLSLEGWEVKSLRDSKVQIKESYVILRSNEIFLYGAHISPLKSVSTHVNSDPIRTRKLLLNRLEINRIKEKINQKGATIVALKLYWIRGMVKLEIGLAKGKKSYDKRQDNKLRDWQRDKQRTLKQINYRL.

Belongs to the SmpB family.

It localises to the cytoplasm. Its function is as follows. Required for rescue of stalled ribosomes mediated by trans-translation. Binds to transfer-messenger RNA (tmRNA), required for stable association of tmRNA with ribosomes. tmRNA and SmpB together mimic tRNA shape, replacing the anticodon stem-loop with SmpB. tmRNA is encoded by the ssrA gene; the 2 termini fold to resemble tRNA(Ala) and it encodes a 'tag peptide', a short internal open reading frame. During trans-translation Ala-aminoacylated tmRNA acts like a tRNA, entering the A-site of stalled ribosomes, displacing the stalled mRNA. The ribosome then switches to translate the ORF on the tmRNA; the nascent peptide is terminated with the 'tag peptide' encoded by the tmRNA and targeted for degradation. The ribosome is freed to recommence translation, which seems to be the essential function of trans-translation. The chain is SsrA-binding protein from Vesicomyosocius okutanii subsp. Calyptogena okutanii (strain HA).